The chain runs to 254 residues: Polysaccharide deacetylase domain-containing protein ECU11_0510 (254 aa).

A NodB homology domain is found at 26-210 (GMIAINFVDG…IGKDKGYRFV (185 aa)).

The sequence is that of Polysaccharide deacetylase domain-containing protein ECU11_0510 from Encephalitozoon cuniculi (strain GB-M1) (Microsporidian parasite).